A 428-amino-acid chain; its full sequence is Adenylosuccinate synthetase (428 aa).

Residues 12–18 and 40–42 each bind GTP; these read GDEGKGK and GHT. Asp-13 functions as the Proton acceptor in the catalytic mechanism. Mg(2+) is bound by residues Asp-13 and Gly-40. Residues 13 to 16, 38 to 41, Thr-133, Arg-147, Asn-224, Thr-239, and Arg-303 each bind IMP; these read DEGK and NAGH. His-41 functions as the Proton donor in the catalytic mechanism. Residue 299 to 305 coordinates substrate; it reads TTTGRRR. GTP contacts are provided by residues Arg-305, 331–333, and 413–415; these read KLD and GVG.

This sequence belongs to the adenylosuccinate synthetase family. As to quaternary structure, homodimer. It depends on Mg(2+) as a cofactor.

It localises to the cytoplasm. It carries out the reaction IMP + L-aspartate + GTP = N(6)-(1,2-dicarboxyethyl)-AMP + GDP + phosphate + 2 H(+). The protein operates within purine metabolism; AMP biosynthesis via de novo pathway; AMP from IMP: step 1/2. Functionally, plays an important role in the de novo pathway and in the salvage pathway of purine nucleotide biosynthesis. Catalyzes the first committed step in the biosynthesis of AMP from IMP. The polypeptide is Adenylosuccinate synthetase (Coprinopsis cinerea (strain Okayama-7 / 130 / ATCC MYA-4618 / FGSC 9003) (Inky cap fungus)).